Reading from the N-terminus, the 421-residue chain is Putative nickel insertion protein (421 aa).

The protein belongs to the LarC family.

The protein is Putative nickel insertion protein of Gloeobacter violaceus (strain ATCC 29082 / PCC 7421).